Reading from the N-terminus, the 104-residue chain is Complex III assembly factor LYRM7 (104 aa).

The protein belongs to the complex I LYR family. Interacts with UQCRFS1.

It localises to the mitochondrion matrix. Assembly factor required for Rieske Fe-S protein UQCRFS1 incorporation into the cytochrome b-c1 (CIII) complex. Functions as a chaperone, binding to this subunit within the mitochondrial matrix and stabilizing it prior to its translocation and insertion into the late CIII dimeric intermediate within the mitochondrial inner membrane. The protein is Complex III assembly factor LYRM7 (LYRM7) of Danio rerio (Zebrafish).